Here is a 193-residue protein sequence, read N- to C-terminus: Ion-translocating oxidoreductase complex subunit A (193 aa).

The next 6 helical transmembrane spans lie at 5 to 25 (LLLFIGTVLVNNFVLVKFLGL), 47 to 67 (FVITLASICAWLVNHLILLPL), 72 to 92 (LRTMAYILVIAVVVQFTEMVV), 102 to 122 (LLGIFLPLITTNCAVLGVPLL), 134 to 154 (AIYGFSASIGFSLVMVLFAGV), and 171 to 191 (SIALVTAGLMALAFMGFAGLV).

The protein belongs to the NqrDE/RnfAE family. As to quaternary structure, the complex is composed of six subunits: RnfA, RnfB, RnfC, RnfD, RnfE and RnfG.

The protein localises to the cell inner membrane. In terms of biological role, part of a membrane-bound complex that couples electron transfer with translocation of ions across the membrane. The chain is Ion-translocating oxidoreductase complex subunit A from Erwinia tasmaniensis (strain DSM 17950 / CFBP 7177 / CIP 109463 / NCPPB 4357 / Et1/99).